The following is a 171-amino-acid chain: Secretion monitor (171 aa).

An N-terminal signal peptide occupies residues 1–30; sequence MIGILNRWRQFGRRYFWPHLLLGMVAASLG.

This sequence belongs to the SecM family.

Its subcellular location is the cytoplasm. It is found in the cytosol. The protein resides in the periplasm. In terms of biological role, regulates secA expression by translational coupling of the secM secA operon. Translational pausing at a specific Pro residue 5 residues before the end of the protein may allow disruption of a mRNA repressor helix that normally suppresses secA translation initiation. This is Secretion monitor from Pectobacterium atrosepticum (strain SCRI 1043 / ATCC BAA-672) (Erwinia carotovora subsp. atroseptica).